The following is a 147-amino-acid chain: Hemoglobin subunit beta (147 aa).

Val-2 is subject to N-acetylvaline. Positions 3 to 147 (HLTAEEKSAV…VANALAHKYH (145 aa)) constitute a Globin domain. Position 13 is a phosphothreonine (Thr-13). Ser-45 carries the post-translational modification Phosphoserine. At Lys-60 the chain carries N6-acetyllysine. Residue His-64 coordinates heme b. Lys-83 is modified (N6-acetyllysine). Heme b is bound at residue His-93. Position 94 is an S-nitrosocysteine (Cys-94). The residue at position 145 (Lys-145) is an N6-acetyllysine.

This sequence belongs to the globin family. In terms of assembly, heterotetramer of two alpha chains and two beta chains. In terms of tissue distribution, red blood cells.

In terms of biological role, involved in oxygen transport from the lung to the various peripheral tissues. The protein is Hemoglobin subunit beta (HBB) of Sapajus apella (Brown-capped capuchin).